A 286-amino-acid chain; its full sequence is Acetyl-coenzyme A carboxylase carboxyl transferase subunit beta (286 aa).

Residues 28-286 enclose the CoA carboxyltransferase N-terminal domain; that stretch reads LMQKCSNCKK…KMHMDGRQLK (259 aa). Positions 32, 35, 51, and 54 each coordinate Zn(2+). The C4-type zinc-finger motif lies at 32–54; the sequence is CSNCKKIYYRKEMVKALQVCPNC.

The protein belongs to the AccD/PCCB family. As to quaternary structure, acetyl-CoA carboxylase is a heterohexamer composed of biotin carboxyl carrier protein (AccB), biotin carboxylase (AccC) and two subunits each of ACCase subunit alpha (AccA) and ACCase subunit beta (AccD). Zn(2+) serves as cofactor.

The protein resides in the cytoplasm. It catalyses the reaction N(6)-carboxybiotinyl-L-lysyl-[protein] + acetyl-CoA = N(6)-biotinyl-L-lysyl-[protein] + malonyl-CoA. It functions in the pathway lipid metabolism; malonyl-CoA biosynthesis; malonyl-CoA from acetyl-CoA: step 1/1. Component of the acetyl coenzyme A carboxylase (ACC) complex. Biotin carboxylase (BC) catalyzes the carboxylation of biotin on its carrier protein (BCCP) and then the CO(2) group is transferred by the transcarboxylase to acetyl-CoA to form malonyl-CoA. The sequence is that of Acetyl-coenzyme A carboxylase carboxyl transferase subunit beta from Oceanobacillus iheyensis (strain DSM 14371 / CIP 107618 / JCM 11309 / KCTC 3954 / HTE831).